Here is a 254-residue protein sequence, read N- to C-terminus: Alcohol dehydrogenase (254 aa).

M1 is modified (N-acetylmethionine). 10-33 (FVAALGGIGLDTSRELVKRNLKNF) serves as a coordination point for NAD(+). S138 provides a ligand contact to substrate. The active-site Proton acceptor is the Y151.

This sequence belongs to the short-chain dehydrogenases/reductases (SDR) family. As to quaternary structure, homodimer.

The catalysed reaction is a primary alcohol + NAD(+) = an aldehyde + NADH + H(+). It catalyses the reaction a secondary alcohol + NAD(+) = a ketone + NADH + H(+). This Drosophila lebanonensis (Fruit fly) protein is Alcohol dehydrogenase (Adh).